The sequence spans 103 residues: Co-chaperonin GroES (103 aa).

It belongs to the GroES chaperonin family. In terms of assembly, heptamer of 7 subunits arranged in a ring. Interacts with the chaperonin GroEL.

It is found in the cytoplasm. In terms of biological role, together with the chaperonin GroEL, plays an essential role in assisting protein folding. The GroEL-GroES system forms a nano-cage that allows encapsulation of the non-native substrate proteins and provides a physical environment optimized to promote and accelerate protein folding. GroES binds to the apical surface of the GroEL ring, thereby capping the opening of the GroEL channel. This is Co-chaperonin GroES from Prochlorococcus marinus (strain MIT 9312).